We begin with the raw amino-acid sequence, 145 residues long: Large ribosomal subunit protein uL13 (145 aa).

This sequence belongs to the universal ribosomal protein uL13 family. As to quaternary structure, part of the 50S ribosomal subunit.

This protein is one of the early assembly proteins of the 50S ribosomal subunit, although it is not seen to bind rRNA by itself. It is important during the early stages of 50S assembly. This is Large ribosomal subunit protein uL13 from Bacillus cereus (strain ZK / E33L).